Consider the following 77-residue polypeptide: Fungal protease inhibitor F (77 aa).

A signal peptide spans 1–22; the sequence is MASKNLFVLFFIFALFAANIAA. Cystine bridges form between Cys25–Cys57, Cys36–Cys49, Cys40–Cys77, and Cys59–Cys71.

This sequence belongs to the protease inhibitor I40 family. In terms of tissue distribution, hemolymph.

The protein resides in the secreted. Its function is as follows. Highly specific for fungal protease and subtilisin. The polypeptide is Fungal protease inhibitor F (Bombyx mori (Silk moth)).